The sequence spans 215 residues: Pyrrolidone-carboxylate peptidase (215 aa).

Catalysis depends on residues glutamate 78, cysteine 141, and histidine 165.

Belongs to the peptidase C15 family. As to quaternary structure, homotetramer.

The protein localises to the cytoplasm. It catalyses the reaction Release of an N-terminal pyroglutamyl group from a polypeptide, the second amino acid generally not being Pro.. In terms of biological role, removes 5-oxoproline from various penultimate amino acid residues except L-proline. This Streptococcus pyogenes serotype M1 protein is Pyrrolidone-carboxylate peptidase (pcp).